A 409-amino-acid polypeptide reads, in one-letter code: Autophagy-related protein 21 (409 aa).

WD repeat units lie at residues 1–35, 221–261, 273–312, and 361–402; these read MKVL…KCFE, VHKG…TLQS, TRPC…QQNK, and KVDD…GECI. The L/FRRG motif motif lies at 269-273; sequence FRRGT.

This sequence belongs to the WD repeat PROPPIN family.

It is found in the cytoplasm. Its subcellular location is the membrane. The protein resides in the vacuole membrane. Functionally, required for cytoplasm to vacuole transport (Cvt) vesicles formation and mitophagy. Involved in binding of phosphatidylethanolamine to ATG8 and in recruitment of ATG8 and ATG5 to the pre-autophagosomal structure. Protects ATG8 from ARG4-mediated cleavage. In Eremothecium gossypii (strain ATCC 10895 / CBS 109.51 / FGSC 9923 / NRRL Y-1056) (Yeast), this protein is Autophagy-related protein 21 (ATG21).